The chain runs to 272 residues: Homeobox protein SIX3 (272 aa).

Residues 169 to 228 (GEQKTHCFKERTRGLLREWYLQDPYPNPGKKRELAHATGLTPTQVGNWFKNRRQRDRAAA) constitute a DNA-binding region (homeobox). Positions 244-272 (CTLSGGDSSERADGDTFLSVTDSDSDLDV) are disordered.

It belongs to the SIX/Sine oculis homeobox family. Interacts with GMNN.

It is found in the nucleus. Transcriptional regulator which can act as both a transcriptional repressor and activator by binding a ATTA homeodomain core recognition sequence on these target genes. During forebrain development represses WNT1 expression allowing zona limitans intrathalamica formation and thereby ensuring proper anterio-posterior patterning of the diencephalon and formation of the rostral diencephalon. Acts as a direct upstream activator of SHH expression in the rostral diencephalon ventral midline and that in turn SHH maintains its expression. In addition, Six3 activity is required for the formation of the telencephalon. During postnatal stages of brain development is necessary for ependymal cell maturation by promoting the maturation of radial glia into ependymal cells through regulation of neuroblast proliferation and migration. Acts on the proliferation and differentiation of neural progenitor cells through activating transcription of CCND1 and CCND2. During early lens formation plays a role in lens induction and specification by activating directly PAX6 in the presumptive lens ectoderm. In turn PAX6 activates SIX3 resulting in activation of PDGFRA and CCND1 promoting cell proliferation. Also is required for the neuroretina development by directly suppressing WNT8B expression in the anterior neural plate territory. Its action during retina development and lens morphogenesis is AES and TLE4-dependent manner. Furthermore, during eye development regulates several genes expression. Before and during early lens development represses the CRYGF promoter by binding a SIX repressor element. Directly activates RHO transcription, or cooperates with CRX or NRL. Six3 also functions in the formation of the proximodistal axis of the optic cup, and promotes the formation of optic vesicles-like structures. During pituitary development, acts in parallel or alternatively with HESX1 to control cell proliferation through Wnt/beta-catenin pathway. Plays a role in eye development by suppressing WNT1 expression and in dorsal-ventral patterning by repressing BMP signaling pathway. In Oryzias latipes (Japanese rice fish), this protein is Homeobox protein SIX3 (six3).